The primary structure comprises 194 residues: ATP synthase subunit b 1 (194 aa).

The helical transmembrane segment at 1–21 (MLLGTVVTVLSTLPAIAYAMD) threads the bilayer.

This sequence belongs to the ATPase B chain family. In terms of assembly, F-type ATPases have 2 components, F(1) - the catalytic core - and F(0) - the membrane proton channel. F(1) has five subunits: alpha(3), beta(3), gamma(1), delta(1), epsilon(1). F(0) has three main subunits: a(1), b(2) and c(10-14). The alpha and beta chains form an alternating ring which encloses part of the gamma chain. F(1) is attached to F(0) by a central stalk formed by the gamma and epsilon chains, while a peripheral stalk is formed by the delta and b chains.

It is found in the cell inner membrane. In terms of biological role, f(1)F(0) ATP synthase produces ATP from ADP in the presence of a proton or sodium gradient. F-type ATPases consist of two structural domains, F(1) containing the extramembraneous catalytic core and F(0) containing the membrane proton channel, linked together by a central stalk and a peripheral stalk. During catalysis, ATP synthesis in the catalytic domain of F(1) is coupled via a rotary mechanism of the central stalk subunits to proton translocation. Component of the F(0) channel, it forms part of the peripheral stalk, linking F(1) to F(0). The chain is ATP synthase subunit b 1 from Granulibacter bethesdensis (strain ATCC BAA-1260 / CGDNIH1).